A 757-amino-acid polypeptide reads, in one-letter code: Alcohol dehydrogenase (quinone), dehydrogenase subunit (757 aa).

An N-terminal signal peptide occupies residues 1 to 34; sequence MTSGLLTPIKVTKKRLLSCAAALAFSAAVPVAFA. Position 35 is a pyrrolidone carboxylic acid (glutamine 35). Glutamate 95 provides a ligand contact to pyrroloquinoline quinone. Cysteine 141 and cysteine 142 form a disulfide bridge. Residue arginine 147 coordinates pyrroloquinoline quinone. Residue glutamate 215 participates in Ca(2+) binding. Threonine 277 contacts pyrroloquinoline quinone. The Ca(2+) site is built by asparagine 297 and aspartate 342. Catalysis depends on aspartate 342, which acts as the Proton acceptor. 2 residues coordinate pyrroloquinoline quinone: lysine 369 and isoleucine 588. The region spanning 640–719 is the Cytochrome c domain; the sequence is ARQKDGYFMY…DIRNFIVKRA (80 aa). The heme c site is built by cysteine 653, cysteine 656, histidine 657, and methionine 696. The segment at 726 to 757 is disordered; that stretch reads EVKARENSTGVPNDQFLNVPQSTADVPTADHP. A compositionally biased stretch (polar residues) spans 732–750; sequence NSTGVPNDQFLNVPQSTAD.

The protein belongs to the bacterial PQQ dehydrogenase family. As to quaternary structure, the alcohol dehydrogenase multicomponent enzyme system is composed of a dehydrogenase subunit I (AdhA), a cytochrome c subunit II (AdhB) and a subunit III (AdhS). Requires pyrroloquinoline quinone as cofactor. Ca(2+) is required as a cofactor. It depends on heme c as a cofactor.

Its subcellular location is the cell membrane. It catalyses the reaction ethanol + a ubiquinone = a ubiquinol + acetaldehyde. Its activity is regulated as follows. 2,6-dichloro-4-dicyanovinylphenol (PC16) and antimycin A inhibit ubiquinol oxidation activity more selectively than the ubiquinone reductase activity. Dehydrogenase component of the alcohol dehydrogenase multicomponent enzyme system which is involved in the production of acetic acid and in the ethanol oxidase respiratory chain. Quinohemoprotein alcohol dehydrogenase (ADH) catalyzes the oxidation of ethanol to acetaldehyde by transferring electrons to the ubiquinone embedded in the membrane phospholipids. The electrons transfer from ethanol to membranous ubiquinone occurs from pyrroloquinoline quinone (PQQ) to one heme c in subunit I (AdhA), and finally to two heme c in subunit II (AdhB). Besides ubiquinone reduction, ADH also has a ubiquinol (QH2) oxidation reaction which mediates electron transfer from ubiquinol to the non-energy generating bypass oxidase system. The electrons transfer occurs from ubiquinol (QH2) to the additional heme c within subunit II (AdhB). Also able to use quinone analogs such as 2,3-dimethoxy-5-methyl-6-n-decyl-1,4-benzoquinone (DB) and 2,3-dimethoxy-5-methyl-6-n-pentyl-1,4-benzoquinone (PB). The protein is Alcohol dehydrogenase (quinone), dehydrogenase subunit of Gluconobacter oxydans (strain 621H) (Gluconobacter suboxydans).